The chain runs to 315 residues: Solute carrier family 25 member 32 (315 aa).

Solcar repeat units follow at residues 20-109 (HVRY…IKSY), 118-209 (LEAT…LKLK), and 222-306 (LSTV…VSHF). 6 consecutive transmembrane segments (helical) span residues 26 to 43 (LIAG…LHPL), 89 to 106 (IWGA…YNAI), 123 to 143 (YLVS…PLWV), 186 to 203 (FVPG…FMAY), 227 to 243 (YISV…AATY), and 281 to 300 (GIAP…FVVY).

It belongs to the mitochondrial carrier (TC 2.A.29) family. Ubiquitous.

It localises to the mitochondrion inner membrane. It carries out the reaction FAD(in) = FAD(out). Facilitates flavin adenine dinucleotide (FAD) translocation across the mitochondrial inner membrane into the mitochondrial matrix where it acts as a redox cofactor to assist flavoenzyme activities in fundamental metabolic processes including fatty acid beta-oxidation, amino acid and choline metabolism as well as mitochondrial electron transportation. In particular, provides FAD to DLD dehydrogenase of the glycine cleavage system, part of mitochondrial one-carbon metabolic pathway involved in neural tube closure in early embryogenesis. In Homo sapiens (Human), this protein is Solute carrier family 25 member 32.